Here is a 487-residue protein sequence, read N- to C-terminus: 3-octaprenyl-4-hydroxybenzoate carboxy-lyase (487 aa).

Asparagine 172 serves as a coordination point for Mn(2+). Prenylated FMN is bound by residues 175–177 (IYR), 189–191 (RWL), and 194–195 (RG). Mn(2+) is bound at residue glutamate 238. Residue aspartate 287 is the Proton donor of the active site.

Belongs to the UbiD family. In terms of assembly, homohexamer. Prenylated FMN serves as cofactor. Requires Mn(2+) as cofactor.

It localises to the cell membrane. It catalyses the reaction a 4-hydroxy-3-(all-trans-polyprenyl)benzoate + H(+) = a 2-(all-trans-polyprenyl)phenol + CO2. It participates in cofactor biosynthesis; ubiquinone biosynthesis. Catalyzes the decarboxylation of 3-octaprenyl-4-hydroxy benzoate to 2-octaprenylphenol, an intermediate step in ubiquinone biosynthesis. This Thiobacillus denitrificans (strain ATCC 25259 / T1) protein is 3-octaprenyl-4-hydroxybenzoate carboxy-lyase.